Reading from the N-terminus, the 492-residue chain is Putative protein disulfide-isomerase C1F5.02 (492 aa).

Positions 1–22 (MKISNLLAAFLAFSGGFFCASA) are cleaved as a signal peptide. A Thioredoxin 1 domain is found at 23–128 (EVPKVNKEGL…LVKYMRKQLL (106 aa)). Active-site nucleophile residues include Cys51 and Cys54. Cys51 and Cys54 form a disulfide bridge. N-linked (GlcNAc...) asparagine glycans are attached at residues Asn161 and Asn257. The Thioredoxin 2 domain maps to 323 to 462 (ELTAKAMTKF…LSAFIDKHAS (140 aa)). Active-site nucleophile residues include Cys385 and Cys388. Cys385 and Cys388 are joined by a disulfide. Residues 468–492 (KEKESVPAPDLEDQVAVEDEMADEL) form a disordered region. Residues 477-492 (DLEDQVAVEDEMADEL) are compositionally biased toward acidic residues. Positions 489-492 (ADEL) match the Prevents secretion from ER motif.

The protein belongs to the protein disulfide isomerase family.

It is found in the endoplasmic reticulum lumen. The catalysed reaction is Catalyzes the rearrangement of -S-S- bonds in proteins.. In terms of biological role, participates in the folding of proteins containing disulfide bonds, may be involved in glycosylation, prolyl hydroxylation and triglyceride transfer. The protein is Putative protein disulfide-isomerase C1F5.02 of Schizosaccharomyces pombe (strain 972 / ATCC 24843) (Fission yeast).